Consider the following 256-residue polypeptide: 5-oxoprolinase subunit A (256 aa).

Belongs to the LamB/PxpA family. As to quaternary structure, forms a complex composed of PxpA, PxpB and PxpC.

It carries out the reaction 5-oxo-L-proline + ATP + 2 H2O = L-glutamate + ADP + phosphate + H(+). Its function is as follows. Catalyzes the cleavage of 5-oxoproline to form L-glutamate coupled to the hydrolysis of ATP to ADP and inorganic phosphate. The chain is 5-oxoprolinase subunit A from Geobacillus kaustophilus (strain HTA426).